A 198-amino-acid polypeptide reads, in one-letter code: ATP synthase protein MI25 (198 aa).

The helical transmembrane segment at 29–49 threads the bilayer; it reads ISIYNEEMIVALCFIGFIIFS.

It belongs to the ATPase protein MI25 family. F-type ATPases have 2 components, CF(1) - the catalytic core - and CF(0) - the membrane proton channel. CF(1) has five subunits: alpha(3), beta(3), gamma(1), delta(1), epsilon(1). CF(0) has three main subunits: a, b and c.

It is found in the mitochondrion membrane. Functionally, this is one of the chains of the nonenzymatic component (CF(0) subunit) of the mitochondrial ATPase complex. The chain is ATP synthase protein MI25 from Nicotiana tabacum (Common tobacco).